A 1801-amino-acid chain; its full sequence is U3 small nucleolar RNA-associated protein 10 (1801 aa).

The next 2 membrane-spanning stretches (helical) occupy residues 102 to 122 and 136 to 156; these read LALV…EWLI and ILTF…AILP. An HEAT 1 repeat occupies 581–619; it reads DVDVQALLPFMLIALADPSERVRSGAVDALANIGKVVDK. 2 consecutive transmembrane segments (helical) span residues 939–959 and 995–1015; these read IQSG…AIVN and ALLL…HSVM. HEAT repeat units follow at residues 1038 to 1076, 1110 to 1148, 1244 to 1282, 1288 to 1327, and 1756 to 1794; these read DQTI…AFEH, YSMD…DSLK, TLTT…QSPE, QTRM…KYGK, and LALL…VLGE.

Belongs to the HEATR1/UTP10 family. As to quaternary structure, component of the ribosomal small subunit (SSU) processome.

Its subcellular location is the nucleus. It is found in the nucleolus. The protein resides in the membrane. In terms of biological role, involved in nucleolar processing of pre-18S ribosomal RNA. Involved in ribosome biosynthesis. The chain is U3 small nucleolar RNA-associated protein 10 from Emericella nidulans (strain FGSC A4 / ATCC 38163 / CBS 112.46 / NRRL 194 / M139) (Aspergillus nidulans).